Here is a 328-residue protein sequence, read N- to C-terminus: UDP-N-acetylglucosamine transporter YEA4 (328 aa).

10 consecutive transmembrane segments (helical) span residues 1 to 21 (MSFV…VISF), 30 to 50 (INLG…IQLP), 66 to 86 (HIPL…SVAN), 98 to 118 (IHII…WAVC), 122 to 142 (YSKL…VASL), 166 to 186 (SMFG…LSLL), 198 to 218 (WKET…LGYT), 241 to 261 (LPIA…FICI), 274 to 294 (LTLS…SVYI), and 298 to 318 (VLSV…GLYS).

Belongs to the nucleotide-sugar transporter family. SLC35A subfamily.

The protein localises to the golgi apparatus membrane. In terms of biological role, sugar transporter that specifically mediates the transport of UDP-N-acetylglucosamine (UDP-GlcNAc) from the cytosol into Golgi vesicles where glycosyltransferases function. The chain is UDP-N-acetylglucosamine transporter YEA4 (YEA4) from Kluyveromyces lactis (strain ATCC 8585 / CBS 2359 / DSM 70799 / NBRC 1267 / NRRL Y-1140 / WM37) (Yeast).